The sequence spans 363 residues: UDP-N-acetylglucosamine--N-acetylmuramyl-(pentapeptide) pyrophosphoryl-undecaprenol N-acetylglucosamine transferase (363 aa).

UDP-N-acetyl-alpha-D-glucosamine-binding positions include 14-16 (TGG), R171, S200, and Q290.

The protein belongs to the glycosyltransferase 28 family. MurG subfamily.

The protein localises to the cell inner membrane. It catalyses the reaction di-trans,octa-cis-undecaprenyl diphospho-N-acetyl-alpha-D-muramoyl-L-alanyl-D-glutamyl-meso-2,6-diaminopimeloyl-D-alanyl-D-alanine + UDP-N-acetyl-alpha-D-glucosamine = di-trans,octa-cis-undecaprenyl diphospho-[N-acetyl-alpha-D-glucosaminyl-(1-&gt;4)]-N-acetyl-alpha-D-muramoyl-L-alanyl-D-glutamyl-meso-2,6-diaminopimeloyl-D-alanyl-D-alanine + UDP + H(+). It participates in cell wall biogenesis; peptidoglycan biosynthesis. Cell wall formation. Catalyzes the transfer of a GlcNAc subunit on undecaprenyl-pyrophosphoryl-MurNAc-pentapeptide (lipid intermediate I) to form undecaprenyl-pyrophosphoryl-MurNAc-(pentapeptide)GlcNAc (lipid intermediate II). The protein is UDP-N-acetylglucosamine--N-acetylmuramyl-(pentapeptide) pyrophosphoryl-undecaprenol N-acetylglucosamine transferase of Borreliella burgdorferi (strain ATCC 35210 / DSM 4680 / CIP 102532 / B31) (Borrelia burgdorferi).